We begin with the raw amino-acid sequence, 298 residues long: Urease accessory protein UreD (298 aa).

Belongs to the UreD family. As to quaternary structure, ureD, UreF and UreG form a complex that acts as a GTP-hydrolysis-dependent molecular chaperone, activating the urease apoprotein by helping to assemble the nickel containing metallocenter of UreC. The UreE protein probably delivers the nickel.

Its subcellular location is the cytoplasm. Required for maturation of urease via the functional incorporation of the urease nickel metallocenter. This is Urease accessory protein UreD from Frankia alni (strain DSM 45986 / CECT 9034 / ACN14a).